The following is a 123-amino-acid chain: Large ribosomal subunit protein bL17 (123 aa).

This sequence belongs to the bacterial ribosomal protein bL17 family. Part of the 50S ribosomal subunit. Contacts protein L32.

The chain is Large ribosomal subunit protein bL17 from Mycoplasma genitalium (strain ATCC 33530 / DSM 19775 / NCTC 10195 / G37) (Mycoplasmoides genitalium).